The sequence spans 144 residues: Granulocyte-macrophage colony-stimulating factor (144 aa).

Residues 1 to 17 (MWLQNLLFLNTVVCSIS) form the signal peptide. Ser-22 and Ser-24 each carry an O-linked (GalNAc...) serine glycan. Thr-27 is a glycosylation site (O-linked (GalNAc...) threonine). Residues Asn-44, Asn-45, and Asn-54 are each glycosylated (N-linked (GlcNAc...) asparagine). Cystine bridges form between Cys-71–Cys-113 and Cys-105–Cys-138.

It belongs to the GM-CSF family. Monomer. The signaling GM-CSF receptor complex is a dodecamer of two head-to-head hexamers of two alpha, two beta, and two ligand subunits.

Its subcellular location is the secreted. In terms of biological role, cytokine that stimulates the growth and differentiation of hematopoietic precursor cells from various lineages, including granulocytes, macrophages, eosinophils and erythrocytes. This Felis catus (Cat) protein is Granulocyte-macrophage colony-stimulating factor (CSF2).